The chain runs to 570 residues: Proline--tRNA ligase (570 aa).

The protein belongs to the class-II aminoacyl-tRNA synthetase family. ProS type 1 subfamily. As to quaternary structure, homodimer.

The protein localises to the cytoplasm. It carries out the reaction tRNA(Pro) + L-proline + ATP = L-prolyl-tRNA(Pro) + AMP + diphosphate. Functionally, catalyzes the attachment of proline to tRNA(Pro) in a two-step reaction: proline is first activated by ATP to form Pro-AMP and then transferred to the acceptor end of tRNA(Pro). As ProRS can inadvertently accommodate and process non-cognate amino acids such as alanine and cysteine, to avoid such errors it has two additional distinct editing activities against alanine. One activity is designated as 'pretransfer' editing and involves the tRNA(Pro)-independent hydrolysis of activated Ala-AMP. The other activity is designated 'posttransfer' editing and involves deacylation of mischarged Ala-tRNA(Pro). The misacylated Cys-tRNA(Pro) is not edited by ProRS. This Geobacter metallireducens (strain ATCC 53774 / DSM 7210 / GS-15) protein is Proline--tRNA ligase.